The sequence spans 553 residues: CTP synthase (553 aa).

The segment at 1–278 (MVRRTHGNSQ…DAYVVRELGL (278 aa)) is amidoligase domain. Ser25 is a binding site for CTP. Residue Ser25 participates in UTP binding. ATP contacts are provided by residues 26 to 31 (SLGKGL) and Asp83. The Mg(2+) site is built by Asp83 and Glu152. CTP-binding positions include 159-161 (DIE), 199-204 (KTKPTQ), and Lys235. UTP-binding positions include 199–204 (KTKPTQ) and Lys235. The Glutamine amidotransferase type-1 domain maps to 303–552 (NIAIVGKYID…VKAALDHQAA (250 aa)). Residue Gly366 participates in L-glutamine binding. The active-site Nucleophile; for glutamine hydrolysis is Cys393. L-glutamine is bound by residues 394–397 (LGLQ), Glu417, and Arg478. Active-site residues include His525 and Glu527.

The protein belongs to the CTP synthase family. As to quaternary structure, homotetramer.

The enzyme catalyses UTP + L-glutamine + ATP + H2O = CTP + L-glutamate + ADP + phosphate + 2 H(+). It catalyses the reaction L-glutamine + H2O = L-glutamate + NH4(+). It carries out the reaction UTP + NH4(+) + ATP = CTP + ADP + phosphate + 2 H(+). Its pathway is pyrimidine metabolism; CTP biosynthesis via de novo pathway; CTP from UDP: step 2/2. Its activity is regulated as follows. Allosterically activated by GTP, when glutamine is the substrate; GTP has no effect on the reaction when ammonia is the substrate. The allosteric effector GTP functions by stabilizing the protein conformation that binds the tetrahedral intermediate(s) formed during glutamine hydrolysis. Inhibited by the product CTP, via allosteric rather than competitive inhibition. Functionally, catalyzes the ATP-dependent amination of UTP to CTP with either L-glutamine or ammonia as the source of nitrogen. Regulates intracellular CTP levels through interactions with the four ribonucleotide triphosphates. The sequence is that of CTP synthase from Bifidobacterium longum (strain NCC 2705).